The sequence spans 116 residues: Large ribosomal subunit protein bL19 (116 aa).

This sequence belongs to the bacterial ribosomal protein bL19 family.

In terms of biological role, this protein is located at the 30S-50S ribosomal subunit interface and may play a role in the structure and function of the aminoacyl-tRNA binding site. This Staphylococcus epidermidis (strain ATCC 35984 / DSM 28319 / BCRC 17069 / CCUG 31568 / BM 3577 / RP62A) protein is Large ribosomal subunit protein bL19.